Here is a 296-residue protein sequence, read N- to C-terminus: MAAKTKFRGSFTALVTPFKNGSLDEAAFRSLVNWQISEGTNGLVPVGTTGESPTLSHDEHKKVVEWCIEEAKGRVPVVAGAGSNSTKEAIELAQHAEKAGADAVLVVTPYYNKPTQEGMYQHFKAINDAIGIPIIIYNIPPRSVIDMSVDTMKRLWELKNIAGVKDATASMVRVSQQRAAMGEDFNQLSGEDATILGYMAHGGHGCISVTSNVAPRLCSEFHTAWQKGDHATALKLHDKLMPLHNNLFIESNPAPIKYAMSLLGKLDETLRLPMVPVTEPTRVAVRSAMVHAGLIN.

Threonine 49 is a pyruvate binding site. Tyrosine 137 acts as the Proton donor/acceptor in catalysis. Residue lysine 165 is the Schiff-base intermediate with substrate of the active site. Position 207 (isoleucine 207) interacts with pyruvate.

Belongs to the DapA family. In terms of assembly, homotetramer; dimer of dimers.

It is found in the cytoplasm. It catalyses the reaction L-aspartate 4-semialdehyde + pyruvate = (2S,4S)-4-hydroxy-2,3,4,5-tetrahydrodipicolinate + H2O + H(+). Its pathway is amino-acid biosynthesis; L-lysine biosynthesis via DAP pathway; (S)-tetrahydrodipicolinate from L-aspartate: step 3/4. Functionally, catalyzes the condensation of (S)-aspartate-beta-semialdehyde [(S)-ASA] and pyruvate to 4-hydroxy-tetrahydrodipicolinate (HTPA). In Bradyrhizobium diazoefficiens (strain JCM 10833 / BCRC 13528 / IAM 13628 / NBRC 14792 / USDA 110), this protein is 4-hydroxy-tetrahydrodipicolinate synthase.